Consider the following 620-residue polypeptide: Glutathione-regulated potassium-efflux system protein KefC (620 aa).

The next 12 helical transmembrane spans lie at 4 to 24 (HTLIQALIYLGSAALIVPIAV), 26 to 46 (LGLGSVLGYLIAGCIIGPWGL), 54 to 74 (SILHFAEIGVVLMLFIIGLEL), 90 to 110 (GALQMVICGGLLGLFCMLLGL), 114 to 134 (VAELIGMTLALSSTAIAMQAM), 149 to 169 (FAVLLFQDIAAIPLVAMIPLL), 178 to 198 (MGAFALSALKVAGALVLVVLL), 218 to 238 (VFSAVALFLVFGFGLLLEEVG), 270 to 290 (GLLLGLFFIGVGMSIDFGTLL), 294 to 314 (LRIVILLLGFLIIKIAMLWLI), 327 to 347 (WFAVLLGQGSEFAFVVFGAAQ), and 359 to 379 (SLTLAVALSMAATPILLVILN). Positions 399–518 (QPRVIIAGFG…AGVEKPERET (120 aa)) constitute an RCK N-terminal domain. The tract at residues 597 to 620 (GWQGTEEGKHTGNMADEPETKPSS) is disordered.

It belongs to the monovalent cation:proton antiporter 2 (CPA2) transporter (TC 2.A.37) family. KefC subfamily. As to quaternary structure, homodimer. Interacts with the regulatory subunit KefF.

It is found in the cell inner membrane. Its function is as follows. Pore-forming subunit of a potassium efflux system that confers protection against electrophiles. Catalyzes K(+)/H(+) antiport. The polypeptide is Glutathione-regulated potassium-efflux system protein KefC (Escherichia coli O8 (strain IAI1)).